Consider the following 434-residue polypeptide: N-lysine methyltransferase SMYD2-B (434 aa).

Positions 8 to 242 constitute an SET domain; sequence PGIEQFASPG…PGQEIYTSYI (235 aa). 18–20 is a binding site for S-adenosyl-L-methionine; sequence KGR. Cys53, Cys56, Cys66, Cys69, Cys75, Cys79, His87, and Cys91 together coordinate Zn(2+). Residues 53–91 form an MYND-type zinc finger; sequence CEQCFTRKKGLAKCGKCKKAFYCNANCQKKNWPMHKLEC. S-adenosyl-L-methionine-binding positions include His138, 207-208, and 259-261; these read NH and YYF.

The protein belongs to the class V-like SAM-binding methyltransferase superfamily.

The protein localises to the cytoplasm. The protein resides in the cytosol. Its subcellular location is the nucleus. The enzyme catalyses L-lysyl(4)-[histone H3] + 3 S-adenosyl-L-methionine = N(6),N(6),N(6)-trimethyl-L-lysyl(4)-[histone H3] + 3 S-adenosyl-L-homocysteine + 3 H(+). It carries out the reaction L-lysyl-[protein] + S-adenosyl-L-methionine = N(6)-methyl-L-lysyl-[protein] + S-adenosyl-L-homocysteine + H(+). Protein-lysine N-methyltransferase that methylates both histones and non-histone proteins, including p53/TP53 and RB1. Specifically trimethylates histone H3 'Lys-4' (H3K4me3) in vivo. The activity requires interaction with HSP90alpha. Shows even higher methyltransferase activity on p53/TP53. Monomethylates 'Lys-370' of p53/TP53, leading to decreased DNA-binding activity and subsequent transcriptional regulation activity of p53/TP53. Monomethylates RB1 at 'Lys-860'. The polypeptide is N-lysine methyltransferase SMYD2-B (smyd2b) (Danio rerio (Zebrafish)).